The sequence spans 259 residues: Pycsar effector protein RsmPycTIR (259 aa).

1-120 (MVGGDEVIAN…RRVHEDFSGR (120 aa)) is a binding site for a nucleoside 3',5'-cyclic phosphate. Positions 126-229 (LATGISRRTS…AEFQYQISSS (104 aa)) are TIR-like. 3 helical membrane passes run 136–156 (GWNW…AIWY), 169–189 (VLLP…ADPV), and 234–254 (QATA…LFWI).

Its subcellular location is the cell inner membrane. It carries out the reaction NAD(+) + H2O = ADP-D-ribose + nicotinamide + H(+). In terms of biological role, pycsar (pyrimidine cyclase system for antiphage resistance) provides immunity against bacteriophage. The pyrimidine cyclase (PycC) synthesizes cyclic nucleotides in response to infection; these serve as specific second messenger signals. The signals activate the adjacent effector, leading to bacterial cell death and abortive phage infection. A clade B Pycsar system. Functionally, the effector gene of a two-gene Pycsar system. Expression of this and adjacent uridylate cyclase RsmPycC (AC A0A1V0HUX5) probably confers resistance to bacteriophage. The genes are probably only expressed in response to bacteriophage infection. Probably only responds to cUMP (produced by its cognate NTP cyclase), it may act by degrading NAD(+) and/or by impairing membrane integrity. The protein is Pycsar effector protein RsmPycTIR of Rhodovulum sp. (strain MB263).